A 434-amino-acid polypeptide reads, in one-letter code: Glutamate-1-semialdehyde 2,1-aminomutase (434 aa).

K266 carries the N6-(pyridoxal phosphate)lysine modification.

This sequence belongs to the class-III pyridoxal-phosphate-dependent aminotransferase family. HemL subfamily. Homodimer. Pyridoxal 5'-phosphate serves as cofactor.

The protein localises to the cytoplasm. The enzyme catalyses (S)-4-amino-5-oxopentanoate = 5-aminolevulinate. It functions in the pathway porphyrin-containing compound metabolism; protoporphyrin-IX biosynthesis; 5-aminolevulinate from L-glutamyl-tRNA(Glu): step 2/2. The sequence is that of Glutamate-1-semialdehyde 2,1-aminomutase from Fusobacterium nucleatum subsp. nucleatum (strain ATCC 25586 / DSM 15643 / BCRC 10681 / CIP 101130 / JCM 8532 / KCTC 2640 / LMG 13131 / VPI 4355).